The following is a 288-amino-acid chain: Nucleotide-binding protein Tola_2941 (288 aa).

8-15 (GRSGSGKT) contacts ATP. A GTP-binding site is contributed by 56–59 (DVRN).

It belongs to the RapZ-like family.

In terms of biological role, displays ATPase and GTPase activities. This is Nucleotide-binding protein Tola_2941 from Tolumonas auensis (strain DSM 9187 / NBRC 110442 / TA 4).